We begin with the raw amino-acid sequence, 290 residues long: Coiled-coil domain-containing protein 137 (290 aa).

Disordered regions lie at residues 1–92, 98–117, 139–181, and 269–290; these read MARP…EAQV, LEKE…FKQR, LSKN…EARA, and RQEM…HACL. Residues 20 to 39 are compositionally biased toward low complexity; sequence SGQPQGRRQQQAQGQQRSAS. Basic and acidic residues predominate over residues 56-79; that stretch reads KNQDEQEIPFRLREIMRSRQEMKK. The stretch at 66-89 forms a coiled coil; that stretch reads RLREIMRSRQEMKKTLSNKKRKKE. The segment covering 154–163 has biased composition (basic and acidic residues); the sequence is PKKEKSERKK. The stretch at 155–192 forms a coiled coil; that stretch reads KKEKSERKKAFQKRRLEKAQRKREARAVDRLEQELLKD. The span at 164-178 shows a compositional bias: basic residues; that stretch reads AFQKRRLEKAQRKRE.

It localises to the chromosome. In Mus musculus (Mouse), this protein is Coiled-coil domain-containing protein 137 (Ccdc137).